A 340-amino-acid polypeptide reads, in one-letter code: Deubiquitinase SseL (340 aa).

H222 is a catalytic residue. C284 (nucleophile) is an active-site residue.

The protein belongs to the peptidase C79 family.

It is found in the secreted. It localises to the host cytoplasm. In terms of biological role, effector proteins function to alter host cell physiology and promote bacterial survival in host tissues. This protease targets the host cell ubiquitin pathway by acting as a deubiquitinase in infected host cells. The chain is Deubiquitinase SseL (sseL) from Salmonella arizonae (strain ATCC BAA-731 / CDC346-86 / RSK2980).